The primary structure comprises 78 residues: MLVFLHAVFITVLILLLIGRLQLLERLLLNHSFNLKTVNDFNILYRSLAETRLLKVVLRVIFLVLLGFCCYRLLVTLM.

An N-terminal signal peptide occupies residues 1-23; the sequence is MLVFLHAVFITVLILLLIGRLQL. At 24 to 57 the chain is on the lumenal side; that stretch reads LERLLLNHSFNLKTVNDFNILYRSLAETRLLKVV. A helical membrane pass occupies residues 58–78; it reads LRVIFLVLLGFCCYRLLVTLM. Positions 59–65 are interaction with PPP1CC/PP1-gamma; the sequence is RVIFLVL.

It belongs to the coronaviruses ns7/ns7a protein family. In terms of assembly, interacts with serine/threonine-protein phosphatase PPP1CC/PP1-gamma; this interaction; this interaction probably promotes EIF2S1/eIF-2alpha dephosphorylation.

Its subcellular location is the host membrane. Inhibits the integrated stress response (ISR) in the infected cell by promoting EIF2S1/eIF-2alpha dephosphorylation. Acts as a functional homolog of host PPP1R15A/GADD34 to recruit PP1 phosphatase and dephosphorylate host EIF2S1/eIF-2alpha. May function in the formation of membrane-bound replication complexes or in the assembly of the virus. In Porcine transmissible gastroenteritis coronavirus (strain Purdue) (TGEV), this protein is Non-structural protein 7.